We begin with the raw amino-acid sequence, 302 residues long: Sulfate adenylyltransferase subunit 2 (302 aa).

The disordered stretch occupies residues 280-302 (RQGRLIDSDQSASMEQKKRQGYF).

This sequence belongs to the PAPS reductase family. CysD subfamily. In terms of assembly, heterodimer composed of CysD, the smaller subunit, and CysN.

The enzyme catalyses sulfate + ATP + H(+) = adenosine 5'-phosphosulfate + diphosphate. It functions in the pathway sulfur metabolism; hydrogen sulfide biosynthesis; sulfite from sulfate: step 1/3. Functionally, with CysN forms the ATP sulfurylase (ATPS) that catalyzes the adenylation of sulfate producing adenosine 5'-phosphosulfate (APS) and diphosphate, the first enzymatic step in sulfur assimilation pathway. APS synthesis involves the formation of a high-energy phosphoric-sulfuric acid anhydride bond driven by GTP hydrolysis by CysN coupled to ATP hydrolysis by CysD. The sequence is that of Sulfate adenylyltransferase subunit 2 from Shewanella oneidensis (strain ATCC 700550 / JCM 31522 / CIP 106686 / LMG 19005 / NCIMB 14063 / MR-1).